The sequence spans 391 residues: Formate-dependent phosphoribosylglycinamide formyltransferase (391 aa).

N(1)-(5-phospho-beta-D-ribosyl)glycinamide-binding positions include 20 to 21 and E80; that span reads EL. Residues R112, K153, 158 to 163, 193 to 196, and E201 each bind ATP; these read SSGKGQ and EGFI. One can recognise an ATP-grasp domain in the interval 117-306; it reads RLAAEDLQIP…EFALHVRAFL (190 aa). The Mg(2+) site is built by E265 and E277. Residues D284, K354, and 361-362 contribute to the N(1)-(5-phospho-beta-D-ribosyl)glycinamide site; that span reads RR.

It belongs to the PurK/PurT family. In terms of assembly, homodimer.

The enzyme catalyses N(1)-(5-phospho-beta-D-ribosyl)glycinamide + formate + ATP = N(2)-formyl-N(1)-(5-phospho-beta-D-ribosyl)glycinamide + ADP + phosphate + H(+). It participates in purine metabolism; IMP biosynthesis via de novo pathway; N(2)-formyl-N(1)-(5-phospho-D-ribosyl)glycinamide from N(1)-(5-phospho-D-ribosyl)glycinamide (formate route): step 1/1. Functionally, involved in the de novo purine biosynthesis. Catalyzes the transfer of formate to 5-phospho-ribosyl-glycinamide (GAR), producing 5-phospho-ribosyl-N-formylglycinamide (FGAR). Formate is provided by PurU via hydrolysis of 10-formyl-tetrahydrofolate. The protein is Formate-dependent phosphoribosylglycinamide formyltransferase of Photobacterium profundum (strain SS9).